Reading from the N-terminus, the 215-residue chain is Chaperone protein TorD (215 aa).

It belongs to the TorD/DmsD family. TorD subfamily.

It is found in the cytoplasm. Its function is as follows. Involved in the biogenesis of TorA. Acts on TorA before the insertion of the molybdenum cofactor and, as a result, probably favors a conformation of the apoenzyme that is competent for acquiring the cofactor. The polypeptide is Chaperone protein TorD (Vibrio parahaemolyticus serotype O3:K6 (strain RIMD 2210633)).